The sequence spans 486 residues: Glutamyl-tRNA(Gln) amidotransferase subunit A (486 aa).

Active-site charge relay system residues include K74 and S149. The active-site Acyl-ester intermediate is the S173.

It belongs to the amidase family. GatA subfamily. Heterotrimer of A, B and C subunits.

The enzyme catalyses L-glutamyl-tRNA(Gln) + L-glutamine + ATP + H2O = L-glutaminyl-tRNA(Gln) + L-glutamate + ADP + phosphate + H(+). Its function is as follows. Allows the formation of correctly charged Gln-tRNA(Gln) through the transamidation of misacylated Glu-tRNA(Gln) in organisms which lack glutaminyl-tRNA synthetase. The reaction takes place in the presence of glutamine and ATP through an activated gamma-phospho-Glu-tRNA(Gln). This Prochlorococcus marinus (strain SARG / CCMP1375 / SS120) protein is Glutamyl-tRNA(Gln) amidotransferase subunit A.